Reading from the N-terminus, the 358-residue chain is Methionine import ATP-binding protein MetN (358 aa).

The 246-residue stretch at 2 to 247 (ITTTGLTKVY…PGSELAHELF (246 aa)) folds into the ABC transporter domain. ATP is bound at residue 38–45 (GQSGAGKS).

It belongs to the ABC transporter superfamily. Methionine importer (TC 3.A.1.24) family. The complex is composed of two ATP-binding proteins (MetN), two transmembrane proteins (MetI) and a solute-binding protein (MetQ).

Its subcellular location is the cell membrane. It catalyses the reaction L-methionine(out) + ATP + H2O = L-methionine(in) + ADP + phosphate + H(+). The catalysed reaction is D-methionine(out) + ATP + H2O = D-methionine(in) + ADP + phosphate + H(+). Part of the ABC transporter complex MetNIQ involved in methionine import. Responsible for energy coupling to the transport system. The sequence is that of Methionine import ATP-binding protein MetN from Streptomyces griseus.